Reading from the N-terminus, the 413-residue chain is Imidazolonepropionase (413 aa).

2 residues coordinate Fe(3+): H70 and H72. Zn(2+) contacts are provided by H70 and H72. 3 residues coordinate 4-imidazolone-5-propanoate: R79, Y142, and H175. An N-formimidoyl-L-glutamate-binding site is contributed by Y142. H240 serves as a coordination point for Fe(3+). A Zn(2+)-binding site is contributed by H240. A 4-imidazolone-5-propanoate-binding site is contributed by E243. Position 315 (D315) interacts with Fe(3+). Zn(2+) is bound at residue D315. N-formimidoyl-L-glutamate is bound by residues N317 and G319. S320 contributes to the 4-imidazolone-5-propanoate binding site.

The protein belongs to the metallo-dependent hydrolases superfamily. HutI family. Zn(2+) is required as a cofactor. The cofactor is Fe(3+).

The protein resides in the cytoplasm. It carries out the reaction 4-imidazolone-5-propanoate + H2O = N-formimidoyl-L-glutamate. It functions in the pathway amino-acid degradation; L-histidine degradation into L-glutamate; N-formimidoyl-L-glutamate from L-histidine: step 3/3. In terms of biological role, catalyzes the hydrolytic cleavage of the carbon-nitrogen bond in imidazolone-5-propanoate to yield N-formimidoyl-L-glutamate. It is the third step in the universal histidine degradation pathway. This Treponema denticola (strain ATCC 35405 / DSM 14222 / CIP 103919 / JCM 8153 / KCTC 15104) protein is Imidazolonepropionase.